The following is a 309-amino-acid chain: NAD kinase (309 aa).

Asp89 serves as the catalytic Proton acceptor. Residues 89–90, 163–164, His174, Arg191, Asp193, and 204–209 each bind NAD(+); these read DG, NE, and TAYALS.

Belongs to the NAD kinase family. It depends on a divalent metal cation as a cofactor.

The protein localises to the cytoplasm. The catalysed reaction is NAD(+) + ATP = ADP + NADP(+) + H(+). In terms of biological role, involved in the regulation of the intracellular balance of NAD and NADP, and is a key enzyme in the biosynthesis of NADP. Catalyzes specifically the phosphorylation on 2'-hydroxyl of the adenosine moiety of NAD to yield NADP. The protein is NAD kinase of Shewanella sp. (strain ANA-3).